A 113-amino-acid polypeptide reads, in one-letter code: Nitrogenase vanadium-iron protein delta chain (113 aa).

In terms of assembly, hexamer of two alpha, two beta, and two delta chains. Requires iron-sulfur cluster as cofactor. The cofactor is vanadium cation.

The catalysed reaction is N2 + 8 reduced [2Fe-2S]-[ferredoxin] + 16 ATP + 16 H2O = H2 + 8 oxidized [2Fe-2S]-[ferredoxin] + 2 NH4(+) + 16 ADP + 16 phosphate + 6 H(+). Functionally, the key enzymatic reactions in nitrogen fixation are catalyzed by the nitrogenase complex, which has 2 components: the iron protein (component 2) and a component 1 which is either a molybdenum-iron protein, a vanadium-iron, or an iron-iron protein. The chain is Nitrogenase vanadium-iron protein delta chain (vnfG) from Azotobacter vinelandii.